The following is a 187-amino-acid chain: MIPTVKLNFITSNKNKLAEVKAILGNVVEIDSQAIEVPEIQGSIEEIAKEKARRAAEEIGGPVLTEDTALGFRALKGLPGAYIKHFLSALGHDGLNKMLDSFEDRSAEAVCTFAFCRGPGEEPILFQGRTEGIIVRPRGPLNFGWDPIFEHNGMTYAEMDKEEKNRVSHRYKALAKLKQWLEDGTLP.

11–16 contributes to the ITP binding site; sequence TSNKNK. Position 39 (Glu-39) interacts with Mg(2+). ITP-binding positions include Lys-51, 67–68, Lys-84, 143–146, Lys-164, and 169–170; these read DT, FGWD, and HR.

Belongs to the HAM1 NTPase family. As to quaternary structure, homodimer. The cofactor is Mg(2+). It depends on Mn(2+) as a cofactor.

It localises to the cytoplasm. It is found in the nucleus. The catalysed reaction is ITP + H2O = IMP + diphosphate + H(+). It catalyses the reaction dITP + H2O = dIMP + diphosphate + H(+). It carries out the reaction XTP + H2O = XMP + diphosphate + H(+). Functionally, pyrophosphatase that hydrolyzes non-canonical purine nucleotides such as inosine triphosphate (ITP), deoxyinosine triphosphate (dITP) or xanthosine 5'-triphosphate (XTP) to their respective monophosphate derivatives. The enzyme does not distinguish between the deoxy- and ribose forms. Probably excludes non-canonical purines from RNA and DNA precursor pools, thus preventing their incorporation into RNA and DNA and avoiding chromosomal lesions. This Aspergillus fumigatus (strain ATCC MYA-4609 / CBS 101355 / FGSC A1100 / Af293) (Neosartorya fumigata) protein is Inosine triphosphate pyrophosphatase.